The primary structure comprises 152 residues: Endoribonuclease YbeY (152 aa).

The Zn(2+) site is built by H117, H121, and H127.

The protein belongs to the endoribonuclease YbeY family. The cofactor is Zn(2+).

It is found in the cytoplasm. In terms of biological role, single strand-specific metallo-endoribonuclease involved in late-stage 70S ribosome quality control and in maturation of the 3' terminus of the 16S rRNA. This is Endoribonuclease YbeY from Borreliella afzelii (strain PKo) (Borrelia afzelii).